The chain runs to 806 residues: Plasminogen (806 aa).

The signal sequence occupies residues 1-19 (MEYGKVIFLFLLFLKSGQG). A PAN domain is found at 20 to 98 (ESLENYIKTE…RDVVLFEKRI (79 aa)). 21 disulfide bridges follow: cysteine 49-cysteine 73, cysteine 53-cysteine 61, cysteine 103-cysteine 181, cysteine 124-cysteine 164, cysteine 152-cysteine 176, cysteine 185-cysteine 262, cysteine 188-cysteine 316, cysteine 206-cysteine 245, cysteine 234-cysteine 257, cysteine 275-cysteine 352, cysteine 296-cysteine 335, cysteine 324-cysteine 347, cysteine 371-cysteine 448, cysteine 392-cysteine 431, cysteine 420-cysteine 443, cysteine 476-cysteine 555, cysteine 497-cysteine 538, cysteine 526-cysteine 550, cysteine 563-cysteine 681, cysteine 573-cysteine 581, and cysteine 603-cysteine 619. 5 Kringle domains span residues 102–181 (DCKS…VPEC), 184–262 (ECMH…IPRC), 274–352 (QCLK…IPSC), 370–448 (ECYE…LEKC), and 475–555 (DCMY…IPQC). The region spanning 577-804 (IVGGCYAQPH…YISWIEDVMK (228 aa)) is the Peptidase S1 domain. The residue at position 593 (serine 593) is a Phosphoserine. Catalysis depends on charge relay system residues histidine 618 and aspartate 661. At serine 684 the chain carries Phosphoserine. Intrachain disulfides connect cysteine 695-cysteine 762, cysteine 725-cysteine 741, and cysteine 752-cysteine 780. Serine 756 (charge relay system) is an active-site residue.

The protein belongs to the peptidase S1 family. Plasminogen subfamily. Interacts with CSPG4 and AMOT. Interacts (via the Kringle domains) with HRG; the interaction tethers PLG to the cell surface and enhances its activation. Interacts (via Kringle 4 domain) with ADA; the interaction stimulates PLG activation when in complex with DPP4. Angiostatin: Interacts with ATP5F1A; the interaction inhibits most of the angiogenic effects of angiostatin. Post-translationally, in the presence of the inhibitor, the activation involves only cleavage after Arg-576, yielding two chains held together by two disulfide bonds. In the absence of the inhibitor, the activation involves additionally the removal of the activation peptide.

Its subcellular location is the secreted. It catalyses the reaction Preferential cleavage: Lys-|-Xaa &gt; Arg-|-Xaa, higher selectivity than trypsin. Converts fibrin into soluble products.. Its activity is regulated as follows. Converted into plasmin by plasminogen activators, both plasminogen and its activator being bound to fibrin. Activated with catalytic amounts of streptokinase. In terms of biological role, plasmin dissolves the fibrin of blood clots and acts as a proteolytic factor in a variety of other processes including embryonic development, tissue remodeling, tumor invasion, and inflammation. In ovulation, weakens the walls of the Graafian follicle. It activates the urokinase-type plasminogen activator, collagenases and several complement zymogens, such as C1, C4 and C5. Cleavage of fibronectin and laminin leads to cell detachment and apoptosis. Also cleaves fibrin, thrombospondin and von Willebrand factor. Its role in tissue remodeling and tumor invasion may be modulated by CSPG4. Binds to cells. The chain is Plasminogen (PLG) from Notamacropus eugenii (Tammar wallaby).